Consider the following 429-residue polypeptide: Esterase/beta-lactamase LipL (429 aa).

Residue Ser-88 is the Acyl-ester intermediate of the active site.

Belongs to the beta-lactamase family.

It localises to the secreted. It is found in the cell wall. Its subcellular location is the cell membrane. The enzyme catalyses a fatty acid ester + H2O = an aliphatic alcohol + a fatty acid + H(+). The catalysed reaction is an acetyl ester + H2O = an aliphatic alcohol + acetate + H(+). It carries out the reaction a butanoate ester + H2O = an aliphatic alcohol + butanoate + H(+). It catalyses the reaction an octanoate ester + H2O = an aliphatic alcohol + octanoate + H(+). The enzyme catalyses decanoate ester + H2O = decanoate + an aliphatic alcohol + H(+). The catalysed reaction is a dodecanoate ester + H2O = an aliphatic alcohol + dodecanoate + H(+). It carries out the reaction a tetradecanoate ester + H2O = an aliphatic alcohol + tetradecanoate + H(+). It catalyses the reaction hexadecanoate ester + H2O = an aliphatic alcohol + hexadecanoate + H(+). The enzyme catalyses octadecanoate ester + H2O = an aliphatic alcohol + octadecanoate + H(+). The catalysed reaction is a hexanoate ester + H2O = an aliphatic alcohol + hexanoate + H(+). It carries out the reaction a beta-lactam + H2O = a substituted beta-amino acid. Esterase and beta-lactamase activities are inhibited by the active site residue modifiers phenylmethanesulfonylflouride (PMSF) and diethylpyrocarbonate (DEPC). Functionally, shows both esterase and beta-lactamase activities, with a much higher activity against phenyl esters than against beta-lactams. Shows esterase activity against both long-chain and short-chain p-nitrophenol (pNP) esters, with a preference for shorter chain esters. Hydrolyzes substrates containing beta-lactam ring such as nitrocefin and ampicillin. Functions as an immunogen that activates both humoral and cell-mediated responses. The chain is Esterase/beta-lactamase LipL from Mycobacterium tuberculosis (strain ATCC 25618 / H37Rv).